A 72-amino-acid polypeptide reads, in one-letter code: PAMP-induced secreted peptide 1 (72 aa).

The N-terminal stretch at 1 to 30 is a signal peptide; the sequence is MRRVSWSTVLIVVVMVSLFFVEHVVVPAAA. 2 positions are modified to 4-hydroxyproline: Pro-65 and Pro-67.

In terms of processing, contains 4-hydroxyproline; hydroxylated on Pro-65 and Pro-67. In terms of tissue distribution, expressed in guard cells, hydathodes, leaf trichomes, and vascular tissues of leaves and roots.

The protein resides in the secreted. It is found in the extracellular space. The protein localises to the apoplast. Endogenous secreted peptide that acts as elicitor of immune response and positive regulator of defense response. Amplifies the immune response triggered by flg22, the active epitope of bacterial flagellin. Acts as a negative regulator of root growth. This chain is PAMP-induced secreted peptide 1, found in Arabidopsis thaliana (Mouse-ear cress).